Here is a 147-residue protein sequence, read N- to C-terminus: Phospholipase A2-beta (147 aa).

A signal peptide spans 1-28 (MMFRTSLMRFAAAFFAIVFVVLVGVARS). Cystine bridges form between Cys31-Cys58, Cys35-Cys64, Cys40-Cys117, Cys51-Cys71, Cys70-Cys95, and Cys77-Cys88. 3 residues coordinate Ca(2+): Tyr50, Gly52, and His55. The active site involves His74. Asp75 lines the Ca(2+) pocket. The Prevents secretion from ER signature appears at 144-147 (KTEL).

This sequence belongs to the phospholipase A2 family. It depends on Ca(2+) as a cofactor. Ubiquitous but expressed at a low level. Detected in vascular tissues and in the guard cells. Predominantly detected in pollen.

The protein localises to the secreted. Its subcellular location is the endoplasmic reticulum. The enzyme catalyses a 1,2-diacyl-sn-glycero-3-phosphocholine + H2O = a 1-acyl-sn-glycero-3-phosphocholine + a fatty acid + H(+). With respect to regulation, inhibited by aristolochic acid. In terms of biological role, PA2 catalyzes the calcium-dependent hydrolysis of the 2-acyl groups in 3-sn-phosphoglycerides. Releases lysophospholipids (LPLs) and free fatty acids (FFAs) from membrane phospholipids in response to hormones and other external stimuli. Regulates the process of cell elongation and plays important roles in shoot gravitropism by mediating auxin-induced cell elongation. Involved in stomatal opening in response to light. Plays a role in pollen development and germination and tube growth. This chain is Phospholipase A2-beta (PLA2-BETA), found in Arabidopsis thaliana (Mouse-ear cress).